The chain runs to 527 residues: MSHQPLSCLTEKEDSPTESTGNGPPYLAHPNLDTFTPEELLQQMKELLTENHQLKEAMKLNNQAMKGRFEELSAWTEKQKEERQFFEIQSKEAKERLMALSHENEKLKEELGKLKGKSERSSEDPTDDSRLPRAEAEQEKDQLRTQVVRLQAEKADLLGIVSELQLKLNSSGSSEDSFVEIRMAEGEAEGSVKEIKHSPGPTRTVSTSRALSKYRSRSAEGAKNYLEHEELTVSQLLLCLREGNQKVERLEIALKEAKERVSDFEKKASNRSEIETQTEGSTEKENDEEKGLETVGSEVEALNLQVTSLFKELQEAHTKLSEAELMKKRLQEKSKLTVLQMTHNKLLREHNNALKTIEELTRKESEKVDRAVLKELSEKLELAEQALASKQLQMDEMKQTIAKQEEDLETMTVLRAQMEVYCSDFHAERAAREKIHEQKEQLALQLAVLLKENDAFEDGGRQSLMEMQSRHGARTSGADQQAYLVQRGAEDRDWRQQRNIPIHSCPKCGEVLPDIDTLQIHVMDCII.

Disordered regions lie at residues 1–32 (MSHQ…HPNL) and 101–143 (SHEN…KDQL). Positions 38 to 170 (EELLQQMKEL…VSELQLKLNS (133 aa)) form a coiled coil. The interaction with Rab8 stretch occupies residues 58–209 (MKLNNQAMKG…GPTRTVSTSR (152 aa)). An LIR motif is present at residues 176–181 (DSFVEI). Phosphoserine; by TBK1 is present on S177. The segment covering 186-197 (GEAEGSVKEIKH) has biased composition (basic and acidic residues). 2 disordered regions span residues 186–214 (GEAE…LSKY) and 262–292 (SDFE…EKGL). A Phosphoserine modification is found at S198. Residues 201 to 210 (PTRTVSTSRA) are compositionally biased toward polar residues. The stretch at 239-458 (CLREGNQKVE…LLKENDAFED (220 aa)) forms a coiled coil. 2 stretches are compositionally biased toward basic and acidic residues: residues 262–274 (SDFE…RSEI) and 281–292 (STEKENDEEKGL). Residues 361-527 (TRKESEKVDR…LQIHVMDCII (167 aa)) form an interaction with HD region. The interval 362–470 (RKESEKVDRA…RQSLMEMQSR (109 aa)) is interaction with MYO6. Positions 424–429 (DFHAER) match the UBAN motif. Position 476 is a phosphoserine (S476). The segment at 497-527 (QRNIPIHSCPKCGEVLPDIDTLQIHVMDCII) adopts a CCHC NOA-type zinc-finger fold. The Zn(2+) site is built by C505, C508, H521, and C525.

Self-associates. Interacts with HD. Interacts with GTF3A. Interacts with MYO6. Interacts (via UBAN) with ubiquitinated TFRC. Interacts with GTP-bound Rab8 (RAB8A and/or RAB8B). Interacts with TBC1D17. Interacts with TBK1. Interacts with TRAF3. Binds to linear ubiquitin chains. Interacts with LC3 family members MAP1LC3A, MAP1LC3B, GABARAP, GABARAPL1 and GABARAPL2; OPTN phosphorylation increases the association (at least with MAP1LC3B). Interacts with RAB12; the interaction may be indirect. Interacts with TBK1; this interaction leads to the Golgi localization of TBK1 and its subsequent activation. Interacts with palmitoyltransferase ZDHHC17/HIP14; the interaction does not lead to palmitoylation of OPTN. Interacts with CYLD. Interacts with TOM1; the interaction is indirect and is mediated by MYO6, which acts as a bridge between TOM1 and OPTN. Interacts with USP12; the interaction is independent of USP12 deubiquitinase activity and may be involved in regulation of autophagic flux. Phosphorylated by TBK1, leading to restrict bacterial proliferation in case of infection.

The protein localises to the cytoplasm. Its subcellular location is the perinuclear region. It localises to the golgi apparatus. The protein resides in the trans-Golgi network. It is found in the cytoplasmic vesicle. The protein localises to the autophagosome. Its subcellular location is the recycling endosome. Plays an important role in the maintenance of the Golgi complex, in membrane trafficking, in exocytosis, through its interaction with myosin VI and Rab8. Links myosin VI to the Golgi complex and plays an important role in Golgi ribbon formation. Negatively regulates the induction of IFNB in response to RNA virus infection. Plays a neuroprotective role in the eye and optic nerve. Probably part of the TNF-alpha signaling pathway that can shift the equilibrium toward induction of cell death. May act by regulating membrane trafficking and cellular morphogenesis via a complex that contains Rab8 and huntingtin (HD). Mediates the interaction of Rab8 with the probable GTPase-activating protein TBC1D17 during Rab8-mediated endocytic trafficking, such as that of transferrin receptor (TFRC/TfR); regulates Rab8 recruitment to tubules emanating from the endocytic recycling compartment. Autophagy receptor that interacts directly with both the cargo to become degraded and an autophagy modifier of the MAP1 LC3 family; targets ubiquitin-coated bacteria (xenophagy) and appears to function in the same pathway as SQSTM1 and CALCOCO2/NDP52. This is Optineurin (OPTN) from Pongo abelii (Sumatran orangutan).